The chain runs to 612 residues: Rhamnogalacturonan exolyase YesX (612 aa).

Asn-119 is a substrate binding site. The Ca(2+) site is built by Asp-120, Asp-125, Asp-127, Asp-129, Glu-131, and Glu-133. Substrate is bound by residues Asp-139, Glu-154, and Arg-174. Ca(2+) contacts are provided by Asp-189, Asp-191, Asp-193, Lys-195, and Glu-197. Residues Gly-205 and Arg-222 each contribute to the substrate site. 16 residues coordinate Ca(2+): His-330, Asp-336, Asp-338, Asp-340, Lys-342, Glu-344, Asp-353, His-354, His-366, Asp-368, Asp-374, Asp-376, Arg-379, Gly-381, Glu-383, and Glu-389. Arg-419 is a binding site for substrate. 4 residues coordinate Ca(2+): Asp-472, Asp-474, Val-476, and Glu-478. 516 to 518 lines the substrate pocket; the sequence is NGT. Residues Asn-527, Phe-529, Asp-531, Arg-533, Glu-535, Asn-576, and Ala-578 each coordinate Ca(2+). Tyr-579 provides a ligand contact to substrate. Residue Asn-580 coordinates Ca(2+).

The protein belongs to the polysaccharide lyase 11 family. As to quaternary structure, monomer. Mn(2+) serves as cofactor. It depends on Zn(2+) as a cofactor. Requires Co(2+) as cofactor. Ca(2+) is required as a cofactor.

It localises to the secreted. The catalysed reaction is Exotype eliminative cleavage of alpha-L-rhamnopyranosyl-(1-&gt;4)-alpha-D-galactopyranosyluronic acid bonds of rhamnogalacturonan I oligosaccharides containing alpha-L-rhamnopyranose at the reducing end and 4-deoxy-4,5-unsaturated D-galactopyranosyluronic acid at the non-reducing end. The products are the disaccharide 2-O-(4-deoxy-beta-L-threo-hex-4-enopyranuronosyl)-alpha-L-rhamnopyranose and the shortened rhamnogalacturonan oligosaccharide containing one 4-deoxy-4,5-unsaturated D-galactopyranosyluronic acid at the non-reducing end.. Functionally, pectinolytic enzyme that degrades type I rhamnogalacturonan from plant cell walls and releases disaccharide products. Degrades rhamnogalacturonan, polygalacturonic acid and pectic acid. Has very low activity on pectin. This chain is Rhamnogalacturonan exolyase YesX (yesX), found in Bacillus subtilis (strain 168).